Reading from the N-terminus, the 62-residue chain is Large ribosomal subunit protein uL30 (62 aa).

This sequence belongs to the universal ribosomal protein uL30 family. In terms of assembly, part of the 50S ribosomal subunit.

This is Large ribosomal subunit protein uL30 from Heliobacterium modesticaldum (strain ATCC 51547 / Ice1).